The following is a 985-amino-acid chain: Bifunctional glutamine synthetase adenylyltransferase/adenylyl-removing enzyme (985 aa).

The tract at residues 1 to 472 is adenylyl removase; the sequence is MTSSAPGNAD…HYARLFEGDP (472 aa). Positions 477-985 are adenylyl transferase; that stretch reads SLPPVNYGAG…RRVFTSLLEE (509 aa).

It belongs to the GlnE family. Requires Mg(2+) as cofactor.

The catalysed reaction is [glutamine synthetase]-O(4)-(5'-adenylyl)-L-tyrosine + phosphate = [glutamine synthetase]-L-tyrosine + ADP. It carries out the reaction [glutamine synthetase]-L-tyrosine + ATP = [glutamine synthetase]-O(4)-(5'-adenylyl)-L-tyrosine + diphosphate. Its function is as follows. Involved in the regulation of glutamine synthetase GlnA, a key enzyme in the process to assimilate ammonia. When cellular nitrogen levels are high, the C-terminal adenylyl transferase (AT) inactivates GlnA by covalent transfer of an adenylyl group from ATP to specific tyrosine residue of GlnA, thus reducing its activity. Conversely, when nitrogen levels are low, the N-terminal adenylyl removase (AR) activates GlnA by removing the adenylyl group by phosphorolysis, increasing its activity. The regulatory region of GlnE binds the signal transduction protein PII (GlnB) which indicates the nitrogen status of the cell. The polypeptide is Bifunctional glutamine synthetase adenylyltransferase/adenylyl-removing enzyme (Bradyrhizobium sp. (strain BTAi1 / ATCC BAA-1182)).